The following is a 579-amino-acid chain: CTP synthase (579 aa).

The 249-residue stretch at 310-558 (YVELHDAYLS…VAAAIGCLDQ (249 aa)) folds into the Glutamine amidotransferase type-1 domain. Catalysis depends on for GATase activity residues cysteine 402, histidine 531, and glutamate 533.

It belongs to the CTP synthase family.

The catalysed reaction is UTP + L-glutamine + ATP + H2O = CTP + L-glutamate + ADP + phosphate + 2 H(+). The protein operates within pyrimidine metabolism; CTP biosynthesis via de novo pathway; CTP from UDP: step 2/2. Its function is as follows. Catalyzes the ATP-dependent amination of UTP to CTP with either L-glutamine or ammonia as the source of nitrogen. The polypeptide is CTP synthase (pyr-7) (Neurospora crassa (strain ATCC 24698 / 74-OR23-1A / CBS 708.71 / DSM 1257 / FGSC 987)).